Consider the following 268-residue polypeptide: Cytolethal distending toxin subunit A (268 aa).

Positions 1 to 19 (MQKIIVFILCCFMTFFLYA) are cleaved as a signal peptide. A lipid anchor (N-palmitoyl cysteine) is attached at Cys-20. Residue Cys-20 is the site of S-diacylglycerol cysteine attachment. In terms of domain architecture, Ricin B-type lectin spans 112–252 (VSDFLTILGP…DNFDQQWFLT (141 aa)). Residues 129 to 140 (WALAQGNWIWGY) form a mediates binding to target cells region.

In terms of assembly, heterotrimer of 3 subunits, CdtA, CdtB and CdtC.

It localises to the cell outer membrane. CDTs are cytotoxins which induce cell distension, growth arrest in G2/M phase, nucleus swelling, and chromatin fragmentation in HeLa cells. This is Cytolethal distending toxin subunit A (cdtA) from Campylobacter jejuni subsp. jejuni serotype O:2 (strain ATCC 700819 / NCTC 11168).